The following is a 316-amino-acid chain: Probable cell division protein WhiA (316 aa).

Residues 275 to 309 (TLKELGEMVASGKISKSGINHRLRKLDEIAEQLRT) constitute a DNA-binding region (H-T-H motif).

This sequence belongs to the WhiA family.

It localises to the cytoplasm. The protein localises to the nucleoid. Involved in cell division and chromosome segregation. May influence the activity of FtsZ. Binds DNA, but does not seem to function as a transcription factor. This chain is Probable cell division protein WhiA, found in Bacillus subtilis (strain 168).